Here is a 306-residue protein sequence, read N- to C-terminus: Solute carrier family 25 member 48 (306 aa).

3 Solcar repeats span residues 3–86 (SFQL…TQRF), 101–200 (RSLS…LSEW), and 209–296 (PSPY…SLKA). The next 6 helical transmembrane spans lie at 9–29 (FVAG…LDTV), 61–81 (GMSF…GVFS), 107–127 (LLAS…VELI), 184–204 (IPGY…ITPE), 212–232 (YAAW…ATPM), and 272–290 (ITVN…FLGY).

This sequence belongs to the mitochondrial carrier (TC 2.A.29) family.

It localises to the mitochondrion inner membrane. The polypeptide is Solute carrier family 25 member 48 (Slc25a48) (Mus musculus (Mouse)).